The primary structure comprises 514 residues: RNA-splicing ligase RtcB homolog (514 aa).

5 residues coordinate Mn(2+): aspartate 128, cysteine 131, histidine 236, histidine 268, and histidine 362. Position 235–239 (235–239) interacts with GMP; that stretch reads NHYAE. Residues 362–363, 411–414, serine 418, 437–440, and lysine 513 contribute to the GMP site; these read HN, GGTM, and HGAG. Histidine 437 functions as the GMP-histidine intermediate in the catalytic mechanism.

The protein belongs to the RtcB family. As to quaternary structure, catalytic component of the tRNA-splicing ligase complex. It depends on Mn(2+) as a cofactor.

It carries out the reaction a 3'-end 3'-phospho-ribonucleotide-RNA + a 5'-end dephospho-ribonucleoside-RNA + GTP = a ribonucleotidyl-ribonucleotide-RNA + GMP + diphosphate. The enzyme catalyses a 3'-end 2',3'-cyclophospho-ribonucleotide-RNA + a 5'-end dephospho-ribonucleoside-RNA + GTP + H2O = a ribonucleotidyl-ribonucleotide-RNA + GMP + diphosphate + H(+). Functionally, catalytic subunit of the tRNA-splicing ligase complex that acts by directly joining spliced tRNA halves to mature-sized tRNAs by incorporating the precursor-derived splice junction phosphate into the mature tRNA as a canonical 3',5'-phosphodiester. May act as an RNA ligase with broad substrate specificity, and may function toward other RNAs. This Ostreococcus lucimarinus (strain CCE9901) protein is RNA-splicing ligase RtcB homolog.